The chain runs to 793 residues: Endonuclease MutS2 (793 aa).

335–342 contributes to the ATP binding site; the sequence is GPNTGGKT. A Smr domain is found at 718–793; that stretch reads IDVRGYNLEE…ESGVTIVELR (76 aa).

Belongs to the DNA mismatch repair MutS family. MutS2 subfamily. As to quaternary structure, homodimer. Binds to stalled ribosomes, contacting rRNA.

In terms of biological role, endonuclease that is involved in the suppression of homologous recombination and thus may have a key role in the control of bacterial genetic diversity. Functionally, acts as a ribosome collision sensor, splitting the ribosome into its 2 subunits. Detects stalled/collided 70S ribosomes which it binds and splits by an ATP-hydrolysis driven conformational change. Acts upstream of the ribosome quality control system (RQC), a ribosome-associated complex that mediates the extraction of incompletely synthesized nascent chains from stalled ribosomes and their subsequent degradation. Probably generates substrates for RQC. The sequence is that of Endonuclease MutS2 from Acetivibrio thermocellus (strain ATCC 27405 / DSM 1237 / JCM 9322 / NBRC 103400 / NCIMB 10682 / NRRL B-4536 / VPI 7372) (Clostridium thermocellum).